Consider the following 926-residue polypeptide: Protein transport protein SEC24-2 (926 aa).

The segment at 1–54 (MSHHKKRVYPQAQAQYGQSATPLQQPAQLVPPQDPAAAGMSYAQMGMPPQGAAA) is disordered. Low complexity predominate over residues 20 to 54 (ATPLQQPAQLVPPQDPAAAGMSYAQMGMPPQGAAA). The Zn(2+) site is built by Cys231, Cys234, Cys253, and Cys256. The tract at residues 231 to 256 (CRRCRSYMNPFITFIEQGRRWRCNFC) is zinc finger-like.

Belongs to the SEC23/SEC24 family. SEC24 subfamily. In terms of assembly, the COPII coat is composed of at least 5 proteins: the SEC23/24 complex, the SEC13/31 complex, and the protein SAR1. Golgi apparatus membrane; Peripheral membrane protein; Cytoplasmic side.

It localises to the cytoplasm. It is found in the cytoplasmic vesicle. Its subcellular location is the COPII-coated vesicle membrane. The protein resides in the endoplasmic reticulum membrane. The protein localises to the golgi apparatus membrane. In terms of biological role, component of the coat protein complex II (COPII) which promotes the formation of transport vesicles from the endoplasmic reticulum (ER). The coat has two main functions, the physical deformation of the endoplasmic reticulum membrane into vesicles and the selection of cargo molecules. In Saccharomyces uvarum (strain ATCC 76518 / CBS 7001 / CLIB 283 / NBRC 10550 / MCYC 623 / NCYC 2669 / NRRL Y-11845) (Yeast), this protein is Protein transport protein SEC24-2 (SEC242).